The primary structure comprises 630 residues: Biosynthetic arginine decarboxylase (630 aa).

At Lys99 the chain carries N6-(pyridoxal phosphate)lysine. 281 to 291 serves as a coordination point for substrate; the sequence is VDIGGGLGVDY.

It belongs to the Orn/Lys/Arg decarboxylase class-II family. SpeA subfamily. It depends on Mg(2+) as a cofactor. Pyridoxal 5'-phosphate is required as a cofactor.

The catalysed reaction is L-arginine + H(+) = agmatine + CO2. It participates in amine and polyamine biosynthesis; agmatine biosynthesis; agmatine from L-arginine: step 1/1. Its function is as follows. Catalyzes the biosynthesis of agmatine from arginine. The sequence is that of Biosynthetic arginine decarboxylase from Bacteroides fragilis (strain ATCC 25285 / DSM 2151 / CCUG 4856 / JCM 11019 / LMG 10263 / NCTC 9343 / Onslow / VPI 2553 / EN-2).